We begin with the raw amino-acid sequence, 2254 residues long: Acetyl-CoA carboxylase 1 (2254 aa).

In terms of domain architecture, Biotin carboxylation spans 36-543; that stretch reads PIHSILIANN…HTGWLDSRIA (508 aa). In terms of domain architecture, ATP-grasp spans 189 to 381; sequence NSNLVTIPEE…LPAAQVAVGM (193 aa). 215–272 provides a ligand contact to ATP; sequence CQVVGYPAMIKASWGGGGKGIRKVHNDDEVRALFKQVQGEVPGSPIFIMKVASQSRHL. Mg(2+) contacts are provided by E338, E352, and N354. 3 residues coordinate Mn(2+): E338, E352, and N354. The active site involves R356. A Biotinyl-binding domain is found at 670–744; the sequence is LQNDHDPSKL…QAGELIANLD (75 aa). K711 carries the N6-biotinyllysine modification. T1031 carries the phosphothreonine modification. S1192 bears the Phosphoserine mark. Positions 1492–1831 constitute a CoA carboxyltransferase N-terminal domain; it reads QYKPLGYLDR…YVGGPLPVLA (340 aa). The carboxyltransferase stretch occupies residues 1492 to 2150; sequence QYKPLGYLDR…ESSLVKNVRE (659 aa). Residues R1740, K2041, and R2043 each coordinate CoA. The CoA carboxyltransferase C-terminal domain occupies 1835-2150; sequence PPERIVEYVP…ESSLVKNVRE (316 aa).

Homodimer. The cofactor is biotin. Mg(2+) serves as cofactor. Requires Mn(2+) as cofactor. Expressed in roots, trichomes, epidermal leaf cells, siliques, petals, anthers, and seeds.

The protein localises to the cytoplasm. It is found in the cytosol. The enzyme catalyses hydrogencarbonate + acetyl-CoA + ATP = malonyl-CoA + ADP + phosphate + H(+). It catalyses the reaction N(6)-biotinyl-L-lysyl-[protein] + hydrogencarbonate + ATP = N(6)-carboxybiotinyl-L-lysyl-[protein] + ADP + phosphate + H(+). Its pathway is lipid metabolism; malonyl-CoA biosynthesis; malonyl-CoA from acetyl-CoA: step 1/1. Its function is as follows. Multifunctional enzyme that catalyzes the carboxylation of acetyl-CoA, forming malonyl-CoA, which is used in the plastid for fatty acid synthesis and in the cytosol in various biosynthetic pathways including fatty acid elongation. Required for very long chain fatty acids elongation. Necessary for embryo and plant development. Plays a central function in embryo morphogenesis, especially in apical meristem development. Involved in cell proliferation and tissue patterning. May act as a repressor of cytokinin response. This Arabidopsis thaliana (Mouse-ear cress) protein is Acetyl-CoA carboxylase 1 (ACC1).